The primary structure comprises 304 residues: Beta-lactamase-like protein str6 (304 aa).

The protein belongs to the beta-lactamase family.

It participates in mycotoxin biosynthesis. Beta-lactamase-like protein; part of the gene cluster that mediates the biosynthesis of strobilurin A, an antifungal polyketide that contains a key beta-methoxyacrylate toxophore that targets the complex III of the mitochondrial electron transport chain. Strobilurin biosynthesis begins with construction of benzoyl CoA by step-wise elimination of ammonia from phenylalanine by the phenylalanine ammonia-lyase str11, oxygenation by str8 and retro-Claisen reaction to form benzoic acid, which is activated to its CoA thiolester benzoyl CoA by the dedicated CoA ligase str10. Benzoyl CoA forms the starter unit for the highly reducing polyketide synthase stpks1 that produces the polyketide prestrobilutin A. The FAD-dependent oxygenase str9 then catalyzes the key oxidative rearrangement responsible for the creation of the beta-methoxyacrylate toxophore. Str9 performs epoxidation of the 2,3 olefin of prestrobilutin A, followed by Meinwald rearrangement to furnish the aldehyde intermediate. Rapid enolization of the aldehyde intermediate would give the beta-methoxyacrylate skeleton and methylations catalyzed by str2 and str3 complete the synthesis and lead to the production of strobilurin A. The short-chain dehydrogenase stl2 and the dehydrogenase str4 play a role in the shunt pathway leading to the production of bolineol. The cluster encodes no obvious halogenase gene that could be involved in production of strobilurin B, nor any obvious dimethylallyl-transferase that could be involved in the production of strobilurin G. It is possible that unknown proteins encoded in, or near, the cluster (such as str1 or stl1) may form new classes of halogenases or dimethylally-transferases, or that the responsible genes are located elsewhere on the genome. Similarly, proteins encoded by str5/str6 hydrolases appear to have no chemical role in the biosynthesis of strobilurin A. Finally, no obvious self-resistance gene is found within the cluster. This is Beta-lactamase-like protein str6 from Strobilurus tenacellus.